The primary structure comprises 266 residues: Diphthine synthase (266 aa).

Residues L9, D85, I88, 113–114, L168, A210, and H235 each bind S-adenosyl-L-methionine; that span reads TA.

It belongs to the diphthine synthase family. As to quaternary structure, homodimer.

It catalyses the reaction 2-[(3S)-amino-3-carboxypropyl]-L-histidyl-[translation elongation factor 2] + 3 S-adenosyl-L-methionine = diphthine-[translation elongation factor 2] + 3 S-adenosyl-L-homocysteine + 3 H(+). It functions in the pathway protein modification; peptidyl-diphthamide biosynthesis. Functionally, S-adenosyl-L-methionine-dependent methyltransferase that catalyzes the trimethylation of the amino group of the modified target histidine residue in translation elongation factor 2 (EF-2), to form an intermediate called diphthine. The three successive methylation reactions represent the second step of diphthamide biosynthesis. The polypeptide is Diphthine synthase (Natronomonas pharaonis (strain ATCC 35678 / DSM 2160 / CIP 103997 / JCM 8858 / NBRC 14720 / NCIMB 2260 / Gabara) (Halobacterium pharaonis)).